The following is a 367-amino-acid chain: Putative threonine-phosphate decarboxylase (367 aa).

O-phospho-L-threonine is bound by residues His-12–Gly-13, Asn-29, and Asn-152. An N6-(pyridoxal phosphate)lysine modification is found at Lys-213. Arg-320 and Arg-334 together coordinate O-phospho-L-threonine.

It belongs to the class-II pyridoxal-phosphate-dependent aminotransferase family. The cofactor is pyridoxal 5'-phosphate.

The catalysed reaction is O-phospho-L-threonine + H(+) = (R)-1-aminopropan-2-yl phosphate + CO2. It functions in the pathway cofactor biosynthesis; adenosylcobalamin biosynthesis. In terms of biological role, decarboxylates L-threonine-O-3-phosphate to yield (R)-1-amino-2-propanol O-2-phosphate, the precursor for the linkage between the nucleotide loop and the corrin ring in cobalamin. This is Putative threonine-phosphate decarboxylase (cobD) from Caldanaerobacter subterraneus subsp. tengcongensis (strain DSM 15242 / JCM 11007 / NBRC 100824 / MB4) (Thermoanaerobacter tengcongensis).